An 804-amino-acid chain; its full sequence is Leucine--tRNA ligase (804 aa).

A 'HIGH' region motif is present at residues 40-51; it reads PYPSGAGLHVGH. The short motif at 576–580 is the 'KMSKS' region element; it reads KMSKS. Residue lysine 579 coordinates ATP.

It belongs to the class-I aminoacyl-tRNA synthetase family.

The protein localises to the cytoplasm. It catalyses the reaction tRNA(Leu) + L-leucine + ATP = L-leucyl-tRNA(Leu) + AMP + diphosphate. This is Leucine--tRNA ligase from Staphylococcus aureus (strain MRSA252).